Here is a 259-residue protein sequence, read N- to C-terminus: HTH-type transcriptional regulator Rv1719 (259 aa).

One can recognise an HTH iclR-type domain in the interval 13–75 (IQVIARAAEL…GARGPYRLGP (63 aa)). Residues 35–54 (QAEIGERVGMARSTVSRILN) constitute a DNA-binding region (H-T-H motif). Residues 88-259 (VVTEMHPFLT…AWFNGTEDRK (172 aa)) enclose the IclR-ED domain.

In terms of assembly, homodimer.

In terms of biological role, binds to the upstream region of Rv1714 and probably modulates the expression of the downstream gene(s). The polypeptide is HTH-type transcriptional regulator Rv1719 (Mycobacterium tuberculosis (strain ATCC 25618 / H37Rv)).